Consider the following 132-residue polypeptide: Ribosome-binding factor A (132 aa).

Belongs to the RbfA family. Monomer. Binds 30S ribosomal subunits, but not 50S ribosomal subunits or 70S ribosomes.

Its subcellular location is the cytoplasm. Functionally, one of several proteins that assist in the late maturation steps of the functional core of the 30S ribosomal subunit. Associates with free 30S ribosomal subunits (but not with 30S subunits that are part of 70S ribosomes or polysomes). Required for efficient processing of 16S rRNA. May interact with the 5'-terminal helix region of 16S rRNA. The chain is Ribosome-binding factor A from Caldicellulosiruptor bescii (strain ATCC BAA-1888 / DSM 6725 / KCTC 15123 / Z-1320) (Anaerocellum thermophilum).